Reading from the N-terminus, the 749-residue chain is Cytosolic phospholipase A2 (749 aa).

The segment at 1-178 (MSFIDPYQHI…MKKLLGPKNS (178 aa)) is phospholipid binding. Residue S2 is modified to Phosphoserine. Positions 6-122 (PYQHIIVEHQ…KVGEKKEVPF (117 aa)) constitute a C2 domain. Ca(2+)-binding residues include D40, T41, D43, N65, D93, A94, and N95. The 601-residue stretch at 140–740 (SCPDLRFSMA…SNVEARRFFN (601 aa)) folds into the PLA2c domain. S228 (nucleophile) is an active-site residue. T268 carries the phosphothreonine modification. Residues 409 to 457 (GSQSRGSTMEEELENITTKHIVSNDSSDSDDESHEPKGTENEDAGSDYQ) form a disordered region. A phosphoserine mark is found at S434, S435, and S437. Residue S505 is modified to Phosphoserine; by MAPK. S515 carries the phosphoserine modification. Residue K541 forms a Glycyl lysine isopeptide (Lys-Gly) (interchain with G-Cter in SUMO2) linkage. D549 functions as the Proton acceptor in the catalytic mechanism. K606 participates in a covalent cross-link: Glycyl lysine isopeptide (Lys-Gly) (interchain with G-Cter in SUMO2). S727 and S729 each carry phosphoserine.

Interacts with KAT5. Post-translationally, phosphorylated at both Ser-505 and Ser-727 in response to mitogenic stimuli. As to expression, expressed in various cells and tissues such as macrophages, neutrophils, fibroblasts and lung endothelium. Expressed in platelets (at protein level).

It is found in the cytoplasm. The protein localises to the golgi apparatus membrane. Its subcellular location is the nucleus envelope. The catalysed reaction is a 1,2-diacyl-sn-glycero-3-phosphocholine + H2O = a 1-acyl-sn-glycero-3-phosphocholine + a fatty acid + H(+). The enzyme catalyses a 1-O-alkyl-2-acyl-sn-glycero-3-phosphocholine + H2O = a 1-O-alkyl-sn-glycero-3-phosphocholine + a fatty acid + H(+). It catalyses the reaction a 1-acyl-sn-glycero-3-phosphocholine + H2O = sn-glycerol 3-phosphocholine + a fatty acid + H(+). It carries out the reaction 1-hexadecanoyl-2-(5Z,8Z,11Z,14Z-eicosatetraenoyl)-sn-glycero-3-phosphocholine + H2O = 1-hexadecanoyl-sn-glycero-3-phosphocholine + (5Z,8Z,11Z,14Z)-eicosatetraenoate + H(+). The catalysed reaction is 1,2-di-(5Z,8Z,11Z,14Z-eicosatetraenoyl)-sn-glycero-3-phosphocholine + H2O = 1-(5Z,8Z,11Z,14Z-eicosatetraenoyl)-sn-glycero-3-phosphocholine + (5Z,8Z,11Z,14Z)-eicosatetraenoate + H(+). The enzyme catalyses 1-octadecanoyl-2-(5Z,8Z,11Z,14Z-eicosatetraenoyl)-sn-glycero-3-phosphocholine + H2O = 1-octadecanoyl-sn-glycero-3-phosphocholine + (5Z,8Z,11Z,14Z)-eicosatetraenoate + H(+). It catalyses the reaction 1-hexadecanoyl-2-(9Z,12Z-octadecadienoyl)-sn-glycero-3-phosphocholine + H2O = (9Z,12Z)-octadecadienoate + 1-hexadecanoyl-sn-glycero-3-phosphocholine + H(+). It carries out the reaction 1-octadecanoyl-2-(9Z,12Z,15Z-octadecatrienoyl)-sn-glycero-3-phosphocholine + H2O = (9Z,12Z,15Z)-octadecatrienoate + 1-octadecanoyl-sn-glycero-3-phosphocholine + H(+). The catalysed reaction is 1-(5Z,8Z,11Z,14Z-eicosatetraenoyl)-2-hexadecanoyl-sn-glycero-3-phosphocholine + H2O = 1-(5Z,8Z,11Z,14Z-eicosatetraenoyl)-sn-glycero-3-phosphocholine + hexadecanoate + H(+). The enzyme catalyses 1-O-hexadecyl-2-(5Z,8Z,11Z,14Z)-eicosatetraenoyl-sn-glycero-3-phosphocholine + H2O = 1-O-hexadecyl-sn-glycero-3-phosphocholine + (5Z,8Z,11Z,14Z)-eicosatetraenoate + H(+). It catalyses the reaction 1,2-di-(9Z-octadecenoyl)-sn-glycero-3-phospho-(1'-sn-glycerol) + H2O = 1-(9Z-octadecenoyl)-sn-glycero-3-phospho-(1'-sn-glycerol) + (9Z)-octadecenoate + H(+). It carries out the reaction 1-octadecanoyl-2-(5Z,8Z,11Z,14Z-eicosatetraenoyl)-sn-glycero-3-phosphate + H2O = 1-octadecanoyl-sn-glycero-3-phosphate + (5Z,8Z,11Z,14Z)-eicosatetraenoate + H(+). The catalysed reaction is 1-hexadecanoyl-sn-glycero-3-phosphocholine + H2O = sn-glycerol 3-phosphocholine + hexadecanoate + H(+). The enzyme catalyses 2-(prostaglandin E2)-sn-glycero-3-phosphoethanolamine + H2O = sn-glycero-3-phosphoethanolamine + prostaglandin E2 + H(+). It catalyses the reaction 2-[(15S)-hydroxy-(5Z,8Z,11Z,13E)-eicosatetraenoyl]-sn-glycero-3-phosphocholine + H2O = (15S)-hydroxy-(5Z,8Z,11Z,13E)-eicosatetraenoate + sn-glycerol 3-phosphocholine + H(+). It carries out the reaction 2-[(15R)-hydroxy-(5Z,8Z,11Z,13E)-eicosatetraenoyl]-sn-glycero-3-phosphocholine + H2O = (15R)-hydroxy-(5Z,8Z,11Z,13E)-eicosatetraenoate + sn-glycerol 3-phosphocholine + H(+). The catalysed reaction is 2-(prostaglandin E2)-sn-glycero-3-phosphocholine + H2O = prostaglandin E2 + sn-glycerol 3-phosphocholine + H(+). The enzyme catalyses 2-[(11R)-hydroxy-(5Z,8Z,12E,14Z)-eicosatetraenoyl]-sn-glycero-3-phosphocholine + H2O = (11R)-hydroxy-(5Z,8Z,12E,14Z)-eicosatetraenoate + sn-glycerol 3-phosphocholine + H(+). It catalyses the reaction 1-(5Z,8Z,11Z,14Z-eicosatetraenoyl)-2-O-hexadecyl-sn-glycero-3-phosphocholine + H2O = 2-O-hexadecyl-sn-glycero-3-phosphocholine + (5Z,8Z,11Z,14Z)-eicosatetraenoate + H(+). It carries out the reaction 1-octadecanoyl-2-(5Z,8Z,11Z,14Z-eicosatetraenoyl)-sn-glycero-3-phosphocholine + glycerol = 1-(5Z,8Z,11Z,14Z-eicosatetraenoyl)-glycerol + 1-octadecanoyl-sn-glycero-3-phosphocholine. The catalysed reaction is 1-octadecanoyl-2-(9Z,12Z,15Z-octadecatrienoyl)-sn-glycero-3-phosphocholine + glycerol = 1-(9Z,12Z,15Z-octadecatrienoyl)-glycerol + 1-octadecanoyl-sn-glycero-3-phosphocholine. It participates in membrane lipid metabolism; glycerophospholipid metabolism. The protein operates within lipid metabolism; arachidonate metabolism. It functions in the pathway lipid metabolism; prostaglandin biosynthesis. Its pathway is lipid metabolism; leukotriene B4 biosynthesis. Activated by cytosolic calcium, which is necessary for binding to membrane lipids. Activated by phosphorylation in response to mitogenic stimuli. Activated by ceramide-1-phosphate. Binding (via C2 domain) to ceramide-1-phosphate increases the affinity for membrane lipids. Can be activated by phosphoinositides in the absence of calcium. Inhibited by ANXA5 in a calcium- and substrate-dependent way. Functionally, has primarily calcium-dependent phospholipase and lysophospholipase activities, with a major role in membrane lipid remodeling and biosynthesis of lipid mediators of the inflammatory response. Plays an important role in embryo implantation and parturition through its ability to trigger prostanoid production. Preferentially hydrolyzes the ester bond of the fatty acyl group attached at sn-2 position of phospholipids (phospholipase A2 activity). Selectively hydrolyzes sn-2 arachidonoyl group from membrane phospholipids, providing the precursor for eicosanoid biosynthesis via the cyclooxygenase pathway. In an alternative pathway of eicosanoid biosynthesis, hydrolyzes sn-2 fatty acyl chain of eicosanoid lysophopholipids to release free bioactive eicosanoids. Hydrolyzes the ester bond of the fatty acyl group attached at sn-1 position of phospholipids (phospholipase A1 activity) only if an ether linkage rather than an ester linkage is present at the sn-2 position. This hydrolysis is not stereospecific. Has calcium-independent phospholipase A2 and lysophospholipase activities in the presence of phosphoinositides. Has O-acyltransferase activity. Catalyzes the transfer of fatty acyl chains from phospholipids to a primary hydroxyl group of glycerol (sn-1 or sn-3), potentially contributing to monoacylglycerol synthesis. This Homo sapiens (Human) protein is Cytosolic phospholipase A2 (PLA2G4A).